The following is a 179-amino-acid chain: Large ribosomal subunit protein uL5 (179 aa).

It belongs to the universal ribosomal protein uL5 family. As to quaternary structure, part of the 50S ribosomal subunit; part of the 5S rRNA/L5/L18/L25 subcomplex. Contacts the 5S rRNA and the P site tRNA. Forms a bridge to the 30S subunit in the 70S ribosome.

In terms of biological role, this is one of the proteins that bind and probably mediate the attachment of the 5S RNA into the large ribosomal subunit, where it forms part of the central protuberance. In the 70S ribosome it contacts protein S13 of the 30S subunit (bridge B1b), connecting the 2 subunits; this bridge is implicated in subunit movement. Contacts the P site tRNA; the 5S rRNA and some of its associated proteins might help stabilize positioning of ribosome-bound tRNAs. This Shewanella amazonensis (strain ATCC BAA-1098 / SB2B) protein is Large ribosomal subunit protein uL5.